The chain runs to 992 residues: GATOR2 complex protein WDR59 (992 aa).

WD repeat units lie at residues 57 to 98 (QSKW…GEVG), 103 to 143 (GHTR…KPTV), 146 to 185 (SAVA…TAVE), 189 to 229 (AHLS…KYLN), 232 to 276 (PCQV…APVH), 278 to 318 (FVGH…RVDY), and 319 to 362 (QMQR…SLSH). Residues 343–373 (PEPEKTPHPQDIDHQPSLSHGEEDAIKEDPP) form a disordered region. Residues 344–373 (EPEKTPHPQDIDHQPSLSHGEEDAIKEDPP) show a composition bias toward basic and acidic residues. In terms of domain architecture, RWD spans 393-494 (QEFSLINVQI…RQLVSCLESF (102 aa)). Serine 564 is modified (phosphoserine). The WD 8 repeat unit spans residues 660 to 706 (KSLGELYILNVNDTQETCQKNATSAMLVGRKDLVQVWSLATVATDLC). Residues serine 839, serine 840, and serine 848 each carry the phosphoserine modification. The tract at residues 849-870 (LTYSDPRERERDQHDKNKRLLD) is disordered. Over residues 853 to 869 (DPRERERDQHDKNKRLL) the composition is skewed to basic and acidic residues. The C4-type zinc finger occupies 919–939 (YCSHCRSEVRGTQCAICKGFT). Zn(2+) is bound by residues cysteine 920, cysteine 923, cysteine 932, cysteine 935, cysteine 945, cysteine 956, histidine 961, histidine 964, histidine 967, cysteine 978, cysteine 982, cysteine 984, and cysteine 986. The RING-type; atypical zinc finger occupies 940–989 (FQCAICHVAVRGSSNFCLTCGHGGHTSHMMEWFRTQEVCPTGCGCHCLLE).

It belongs to the WD repeat WDR59 family. In terms of assembly, component of the GATOR2 subcomplex, composed of MIOS, SEC13, SEH1L, WDR24 and WDR59. The GATOR2 complex interacts with CASTOR1 and CASTOR2; the interaction is negatively regulated by arginine. The GATOR2 complex interacts with SESN1, SESN2 and SESN3; the interaction is negatively regulated by amino acids. Interacts with DDB1-CUL4A/B E3 ligase complexes.

Its subcellular location is the lysosome membrane. Its activity is regulated as follows. The GATOR2 complex is negatively regulated by the upstream amino acid sensors CASTOR1 and SESN2, which sequester the GATOR2 complex in absence of amino acids. In the presence of abundant amino acids, GATOR2 is released from CASTOR1 and SESN2 and activated. Its function is as follows. As a component of the GATOR2 complex, functions as an activator of the amino acid-sensing branch of the mTORC1 signaling pathway. The GATOR2 complex indirectly activates mTORC1 through the inhibition of the GATOR1 subcomplex. GATOR2 probably acts as an E3 ubiquitin-protein ligase toward GATOR1. In the presence of abundant amino acids, the GATOR2 complex mediates ubiquitination of the NPRL2 core component of the GATOR1 complex, leading to GATOR1 inactivation. In the absence of amino acids, GATOR2 is inhibited, activating the GATOR1 complex. This is GATOR2 complex protein WDR59 from Mus musculus (Mouse).